We begin with the raw amino-acid sequence, 190 residues long: Transcription antitermination protein NusB (190 aa).

Residues 135–190 (APAPESVAEEADEESSDSAAAASEPTDEGDVSDSPDSSGASDEPAAPSAEIQPTVD) are disordered. Residues 141-150 (VAEEADEESS) show a composition bias toward acidic residues.

Belongs to the NusB family.

Its function is as follows. Involved in transcription antitermination. Required for transcription of ribosomal RNA (rRNA) genes. Binds specifically to the boxA antiterminator sequence of the ribosomal RNA (rrn) operons. This Bifidobacterium longum (strain DJO10A) protein is Transcription antitermination protein NusB.